The primary structure comprises 266 residues: GTP cyclohydrolase MptA (266 aa).

The protein belongs to the GTP cyclohydrolase IV family. In terms of assembly, homodimer. Fe(2+) is required as a cofactor.

It carries out the reaction GTP + H2O = 7,8-dihydroneopterin 2',3'-cyclic phosphate + formate + diphosphate + H(+). It functions in the pathway cofactor biosynthesis; 5,6,7,8-tetrahydromethanopterin biosynthesis. Functionally, converts GTP to 7,8-dihydro-D-neopterin 2',3'-cyclic phosphate, the first intermediate in the biosynthesis of coenzyme methanopterin. This chain is GTP cyclohydrolase MptA, found in Pyrococcus abyssi (strain GE5 / Orsay).